The chain runs to 232 residues: Phosphatidylserine decarboxylase proenzyme (232 aa).

Ser-190 (schiff-base intermediate with substrate; via pyruvic acid) is an active-site residue. A Pyruvic acid (Ser); by autocatalysis modification is found at Ser-190.

This sequence belongs to the phosphatidylserine decarboxylase family. PSD-A subfamily. Heterodimer of a large membrane-associated beta subunit and a small pyruvoyl-containing alpha subunit. The cofactor is pyruvate. In terms of processing, is synthesized initially as an inactive proenzyme. Formation of the active enzyme involves a self-maturation process in which the active site pyruvoyl group is generated from an internal serine residue via an autocatalytic post-translational modification. Two non-identical subunits are generated from the proenzyme in this reaction, and the pyruvate is formed at the N-terminus of the alpha chain, which is derived from the carboxyl end of the proenzyme. The post-translation cleavage follows an unusual pathway, termed non-hydrolytic serinolysis, in which the side chain hydroxyl group of the serine supplies its oxygen atom to form the C-terminus of the beta chain, while the remainder of the serine residue undergoes an oxidative deamination to produce ammonia and the pyruvoyl prosthetic group on the alpha chain.

Its subcellular location is the cell membrane. The catalysed reaction is a 1,2-diacyl-sn-glycero-3-phospho-L-serine + H(+) = a 1,2-diacyl-sn-glycero-3-phosphoethanolamine + CO2. It functions in the pathway phospholipid metabolism; phosphatidylethanolamine biosynthesis; phosphatidylethanolamine from CDP-diacylglycerol: step 2/2. Its function is as follows. Catalyzes the formation of phosphatidylethanolamine (PtdEtn) from phosphatidylserine (PtdSer). This chain is Phosphatidylserine decarboxylase proenzyme, found in Bradyrhizobium sp. (strain ORS 278).